The following is a 1500-amino-acid chain: Alpha-1-macroglobulin (1500 aa).

A signal peptide spans 1 to 24 (MRRNQLPIPVFLLLLLLLPRDATA). Residues Cys48 and Cys86 are joined by a disulfide bond. 3 N-linked (GlcNAc...) asparagine glycosylation sites follow: Asn55, Asn61, and Asn157. 2 disulfide bridges follow: Cys249/Cys298 and Cys267/Cys286. Residues Asn382 and Asn412 are each glycosylated (N-linked (GlcNAc...) asparagine). Cys469 and Cys562 are oxidised to a cystine. A glycan (N-linked (GlcNAc...) asparagine) is linked at Asn568. Cystine bridges form between Cys594/Cys785, Cys642/Cys689, Cys835/Cys863, Cys861/Cys897, Cys935/Cys1344, and Cys1094/Cys1142. The interval 686 to 746 (PRYCPMYQAY…QEVEVRETVR (61 aa)) is bait region. Residues Asn883 and Asn944 are each glycosylated (N-linked (GlcNAc...) asparagine). Residues 986-989 (CGEQ) constitute a cross-link (isoglutamyl cysteine thioester (Cys-Gln)). The N-linked (GlcNAc...) asparagine glycan is linked to Asn1005. A receptor-binding domain region spans residues 1360-1500 (EGEAPFTLKV…FSSDSEQGNA (141 aa)). Residues Asn1390 and Asn1448 are each glycosylated (N-linked (GlcNAc...) asparagine).

This sequence belongs to the protease inhibitor I39 (alpha-2-macroglobulin) family. As to quaternary structure, homotetramer; disulfide-linked. In terms of tissue distribution, widely expressed. Highest level in ovary, testis, uterus and prostate. Protein found in plasma.

The protein resides in the secreted. Functionally, is able to inhibit all four classes of proteinases by a unique 'trapping' mechanism. This protein has a peptide stretch, called the 'bait region' which contains specific cleavage sites for different proteinases. When a proteinase cleaves the bait region, a conformational change is induced in the protein which traps the proteinase. The entrapped enzyme remains active against low molecular weight substrates (activity against high molecular weight substrates is greatly reduced). Following cleavage in the bait region a thioester bond is hydrolyzed and mediates the covalent binding of the protein to the proteinase. In Rattus norvegicus (Rat), this protein is Alpha-1-macroglobulin.